We begin with the raw amino-acid sequence, 452 residues long: Argininosuccinate lyase (452 aa).

The interval 431-452 is disordered; it reads AFRKDSTGSTSPKWSFRAMRRA.

The protein belongs to the lyase 1 family. Argininosuccinate lyase subfamily.

The protein resides in the cytoplasm. It catalyses the reaction 2-(N(omega)-L-arginino)succinate = fumarate + L-arginine. It functions in the pathway amino-acid biosynthesis; L-arginine biosynthesis; L-arginine from L-ornithine and carbamoyl phosphate: step 3/3. The sequence is that of Argininosuccinate lyase from Tremblaya princeps.